Consider the following 344-residue polypeptide: Anthranilate phosphoribosyltransferase (344 aa).

5-phospho-alpha-D-ribose 1-diphosphate-binding positions include Gly83, 86–87 (GD), Thr91, 93–96 (NIST), 111–119 (KHGGRSVSS), and Ser123. Position 83 (Gly83) interacts with anthranilate. Ser95 lines the Mg(2+) pocket. Arg169 contacts anthranilate. The Mg(2+) site is built by Asp228 and Glu229.

It belongs to the anthranilate phosphoribosyltransferase family. Homodimer. It depends on Mg(2+) as a cofactor.

The enzyme catalyses N-(5-phospho-beta-D-ribosyl)anthranilate + diphosphate = 5-phospho-alpha-D-ribose 1-diphosphate + anthranilate. It functions in the pathway amino-acid biosynthesis; L-tryptophan biosynthesis; L-tryptophan from chorismate: step 2/5. Catalyzes the transfer of the phosphoribosyl group of 5-phosphorylribose-1-pyrophosphate (PRPP) to anthranilate to yield N-(5'-phosphoribosyl)-anthranilate (PRA). This Methylibium petroleiphilum (strain ATCC BAA-1232 / LMG 22953 / PM1) protein is Anthranilate phosphoribosyltransferase.